Reading from the N-terminus, the 585-residue chain is Nitrogen permease regulator 3-like protein (585 aa).

The tract at residues 117 to 157 is disordered; the sequence is GEWAKRRKPRTTVESNASSSHLVSKPESSHPSTGSFEVKSS. Polar residues predominate over residues 128-138; the sequence is TVESNASSSHL. Residues 148–157 are compositionally biased toward low complexity; the sequence is STGSFEVKSS.

The protein belongs to the NPR3 family.

The sequence is that of Nitrogen permease regulator 3-like protein from Schizosaccharomyces pombe (strain 972 / ATCC 24843) (Fission yeast).